The primary structure comprises 168 residues: Large ribosomal subunit protein uL10 (168 aa).

It belongs to the universal ribosomal protein uL10 family. Part of the ribosomal stalk of the 50S ribosomal subunit. The N-terminus interacts with L11 and the large rRNA to form the base of the stalk. The C-terminus forms an elongated spine to which L12 dimers bind in a sequential fashion forming a multimeric L10(L12)X complex.

Forms part of the ribosomal stalk, playing a central role in the interaction of the ribosome with GTP-bound translation factors. The protein is Large ribosomal subunit protein uL10 of Acinetobacter baylyi (strain ATCC 33305 / BD413 / ADP1).